A 271-amino-acid polypeptide reads, in one-letter code: Small ribosomal subunit protein uS2 (271 aa).

A disordered region spans residues 235 to 271; sequence FDAKNPLKPQNYNAPNKRPYQDSPRKPSYQNQNQNQI. Residues 262–271 show a composition bias toward polar residues; that stretch reads SYQNQNQNQI.

Belongs to the universal ribosomal protein uS2 family.

The chain is Small ribosomal subunit protein uS2 from Onion yellows phytoplasma (strain OY-M).